The sequence spans 328 residues: Nickel import system permease protein NikB (328 aa).

The next 6 membrane-spanning stretches (helical) occupy residues 11–31 (LMQM…LMKL), 104–124 (LLIS…LGII), 139–159 (VIST…LLFI), 170–190 (ILSQ…AYII), 229–249 (ILPI…GTVV), and 279–299 (VLFI…LTLL). An ABC transmembrane type-1 domain is found at 100-297 (APITLLISFS…IINTIADLLT (198 aa)).

It belongs to the binding-protein-dependent transport system permease family. OppBC subfamily. The complex is composed of two ATP-binding proteins (NikD and NikE), two transmembrane proteins (NikB and NikC) and a solute-binding protein (NikA).

Its subcellular location is the cell membrane. In terms of biological role, part of the ABC transporter complex NikABCDE (Opp2) involved in nickel import. Probably responsible for the translocation of the substrate across the membrane. The chain is Nickel import system permease protein NikB from Staphylococcus aureus (strain MSSA476).